A 337-amino-acid polypeptide reads, in one-letter code: HTH-type transcriptional repressor PurR (337 aa).

One can recognise an HTH lacI-type domain in the interval 2 to 56; that stretch reads ATIKDVAKLAAVSTTTVSHVINKTRFVAEATQKRVWEAVEELNYAPSAVARSLKC. The segment at residues 4–23 is a DNA-binding region (H-T-H motif); that stretch reads IKDVAKLAAVSTTTVSHVIN. Residues 48–56 mediate DNA binding; the sequence is SAVARSLKC. Residues phenylalanine 73, lysine 189, threonine 191, phenylalanine 220, and aspartate 276 each coordinate hypoxanthine.

Homodimer.

Its pathway is purine metabolism; purine nucleotide biosynthesis [regulation]. Its function is as follows. Is the main repressor of the genes involved in the de novo synthesis of purine nucleotides, regulating purB, purC, purEK, purF, purHD, purL, purMN and guaBA expression. PurR is allosterically activated to bind its cognate DNA by binding the purine corepressors, hypoxanthine or guanine, thereby effecting transcription repression. The polypeptide is HTH-type transcriptional repressor PurR (Aliivibrio fischeri (strain MJ11) (Vibrio fischeri)).